The chain runs to 207 residues: Probable GTP-binding protein EngB (207 aa).

One can recognise an EngB-type G domain in the interval 24–199 (GGYEVAFAGR…RAIVGAWLGL (176 aa)). GTP-binding positions include 32–39 (GRSNAGKS), 59–63 (GRTQQ), 77–80 (DLPG), 144–147 (TKAD), and 178–180 (YSG). Residues Ser-39 and Thr-61 each contribute to the Mg(2+) site.

This sequence belongs to the TRAFAC class TrmE-Era-EngA-EngB-Septin-like GTPase superfamily. EngB GTPase family. It depends on Mg(2+) as a cofactor.

Its function is as follows. Necessary for normal cell division and for the maintenance of normal septation. The chain is Probable GTP-binding protein EngB from Xanthomonas euvesicatoria pv. vesicatoria (strain 85-10) (Xanthomonas campestris pv. vesicatoria).